A 344-amino-acid polypeptide reads, in one-letter code: Holliday junction branch migration complex subunit RuvB (344 aa).

Residues 4-194 (CLLRFCYNSL…FGITGHMEYY (191 aa)) form a large ATPase domain (RuvB-L) region. Residues Leu33, Arg34, Gly75, Lys78, Thr79, Thr80, 141–143 (EDF), Arg184, Tyr194, and Arg231 each bind ATP. Thr79 contacts Mg(2+). Residues 195-265 (TDIDLTEIVE…ITDKALTMLD (71 aa)) are small ATPAse domain (RuvB-S). The head domain (RuvB-H) stretch occupies residues 268-344 (HEGLDYVDQK…YEHLGYRYTE (77 aa)). DNA contacts are provided by Arg304, Arg323, Arg325, and Arg328.

The protein belongs to the RuvB family. Homohexamer. Forms an RuvA(8)-RuvB(12)-Holliday junction (HJ) complex. HJ DNA is sandwiched between 2 RuvA tetramers; dsDNA enters through RuvA and exits via RuvB. An RuvB hexamer assembles on each DNA strand where it exits the tetramer. Each RuvB hexamer is contacted by two RuvA subunits (via domain III) on 2 adjacent RuvB subunits; this complex drives branch migration. In the full resolvosome a probable DNA-RuvA(4)-RuvB(12)-RuvC(2) complex forms which resolves the HJ.

The protein resides in the cytoplasm. It carries out the reaction ATP + H2O = ADP + phosphate + H(+). The RuvA-RuvB-RuvC complex processes Holliday junction (HJ) DNA during genetic recombination and DNA repair, while the RuvA-RuvB complex plays an important role in the rescue of blocked DNA replication forks via replication fork reversal (RFR). RuvA specifically binds to HJ cruciform DNA, conferring on it an open structure. The RuvB hexamer acts as an ATP-dependent pump, pulling dsDNA into and through the RuvAB complex. RuvB forms 2 homohexamers on either side of HJ DNA bound by 1 or 2 RuvA tetramers; 4 subunits per hexamer contact DNA at a time. Coordinated motions by a converter formed by DNA-disengaged RuvB subunits stimulates ATP hydrolysis and nucleotide exchange. Immobilization of the converter enables RuvB to convert the ATP-contained energy into a lever motion, pulling 2 nucleotides of DNA out of the RuvA tetramer per ATP hydrolyzed, thus driving DNA branch migration. The RuvB motors rotate together with the DNA substrate, which together with the progressing nucleotide cycle form the mechanistic basis for DNA recombination by continuous HJ branch migration. Branch migration allows RuvC to scan DNA until it finds its consensus sequence, where it cleaves and resolves cruciform DNA. This is Holliday junction branch migration complex subunit RuvB from Streptococcus mutans serotype c (strain ATCC 700610 / UA159).